A 633-amino-acid chain; its full sequence is Early transcription factor 70 kDa subunit (633 aa).

One can recognise a Helicase ATP-binding domain in the interval 32–185 (RTILDHNESV…SNIISIMSDE (154 aa)). Residue 45–52 (HIMGSGKT) participates in ATP binding. The DEXH box motif lies at 135–138 (DEAH). A Helicase C-terminal domain is found at 326–505 (KFKYFIDTIG…TLPFDIKKLL (180 aa)).

Belongs to the helicase family. VETF subfamily. In terms of assembly, heterodimer of a 70 kDa and a 82 kDa subunit. Part of the early transcription complex composed of ETF, RAP94, and the DNA-directed RNA polymerase.

The protein resides in the virion. In terms of biological role, acts with RNA polymerase to initiate transcription from early gene promoters. Is recruited by the RPO-associated protein of 94 kDa (RAP94) to form the early transcription complex, which also contains the core RNA polymerase. ETF heterodimer binds to early gene promoters. The protein is Early transcription factor 70 kDa subunit (VETFS) of Vertebrata (FPV).